The chain runs to 453 residues: Protein LOW PSII ACCUMULATION 1, chloroplastic (453 aa).

Residues 1-92 constitute a chloroplast transit peptide; that stretch reads MAVATAPSLN…LDLFKRGRVK (92 aa). 2 TPR repeats span residues 75–108 and 112–145; these read AELCVNTGLDLFKRGRVKDALVQFETALSLAPNP and QAAYYNKACCHAYRGEGKKAVDCLRIALRDYNLK. 2 helical membrane-spanning segments follow: residues 202 to 222 and 238 to 258; these read FFYFAFAAAAGISMFFTVPRL and TTGNAAINIGGIVVMVSLFLW.

Interacts with psbA, but not with psbD, petB, ALB3, LPA2 or LPA3. Is not a component of the PSII complex.

The protein resides in the plastid. It is found in the chloroplast thylakoid membrane. Chaperone required for efficient photosystem II (PSII) assembly. Binds to psbA during de novo biogenesis of PSII. The chain is Protein LOW PSII ACCUMULATION 1, chloroplastic (LPA1) from Arabidopsis thaliana (Mouse-ear cress).